Here is a 421-residue protein sequence, read N- to C-terminus: Enolase (421 aa).

(2R)-2-phosphoglycerate is bound at residue Q161. The Proton donor role is filled by E203. D240, E283, and D310 together coordinate Mg(2+). Residues K335, R364, S365, and K386 each contribute to the (2R)-2-phosphoglycerate site. K335 serves as the catalytic Proton acceptor.

The protein belongs to the enolase family. It depends on Mg(2+) as a cofactor.

It localises to the cytoplasm. The protein localises to the secreted. Its subcellular location is the cell surface. The catalysed reaction is (2R)-2-phosphoglycerate = phosphoenolpyruvate + H2O. It participates in carbohydrate degradation; glycolysis; pyruvate from D-glyceraldehyde 3-phosphate: step 4/5. Functionally, catalyzes the reversible conversion of 2-phosphoglycerate (2-PG) into phosphoenolpyruvate (PEP). It is essential for the degradation of carbohydrates via glycolysis. The protein is Enolase of Sulfurimonas denitrificans (strain ATCC 33889 / DSM 1251) (Thiomicrospira denitrificans (strain ATCC 33889 / DSM 1251)).